Reading from the N-terminus, the 551-residue chain is Hydroxylamine reductase (551 aa).

[2Fe-2S] cluster is bound by residues cysteine 3, cysteine 6, cysteine 18, and cysteine 25. Hybrid [4Fe-2O-2S] cluster contacts are provided by histidine 249, glutamate 273, cysteine 317, cysteine 405, cysteine 433, cysteine 459, glutamate 493, and lysine 495. Cysteine 405 carries the cysteine persulfide modification.

This sequence belongs to the HCP family. The cofactor is [2Fe-2S] cluster. Hybrid [4Fe-2O-2S] cluster is required as a cofactor.

Its subcellular location is the cytoplasm. It carries out the reaction A + NH4(+) + H2O = hydroxylamine + AH2 + H(+). Functionally, catalyzes the reduction of hydroxylamine to form NH(3) and H(2)O. This Actinobacillus pleuropneumoniae serotype 5b (strain L20) protein is Hydroxylamine reductase.